A 519-amino-acid polypeptide reads, in one-letter code: Histidine--tRNA ligase (519 aa).

It belongs to the class-II aminoacyl-tRNA synthetase family. As to quaternary structure, homodimer.

It localises to the cytoplasm. The enzyme catalyses tRNA(His) + L-histidine + ATP = L-histidyl-tRNA(His) + AMP + diphosphate + H(+). This chain is Histidine--tRNA ligase, found in Roseobacter denitrificans (strain ATCC 33942 / OCh 114) (Erythrobacter sp. (strain OCh 114)).